Reading from the N-terminus, the 726-residue chain is MDTFITKNFQTTIIQKAKNTMAEFSEDPELQPAVLFNICVHLEVCYVISDMNFLDEEGKTYTALEGQGKEQNLRPQYEVIEGMPRNIAWMVQRSLAQEHGIETPRYLADLFDYKTKRFIEVGITKGLADDYFWKKKEKLGNSMELMIFSYNQDYSLSDESSLDEEGKGRVLSRLTELQAELSLKNLWQVLIGEEEIEKGIDFKLGQTISKLRNISVPAGFSNFEGMRSYIDNIDPKGAIERNLARMSPLVSVTPKKLKWEDLRPIGPHIYNHELPEVPYNAFLLMSDELGLANMTEGKSKKPKTLAKECLERYSTLRDQTDPILIMKSEKANENFLWRLWRDCVNTISNEETGNELQKTNYAKWATGDGLTYQKIMKEVAIDDETMYQEEPKIPNKCRVAAWVQAEMNLLSTLTSKRALDLPEIGPDVAPVEHVGSERRKYFVNEINYCKASTVMMKYVLFHTSLLNESNASMGKYKVIPITNRVVNEKGESFDMLYGLAVKGQSHLRGDTDVVTVVTFEFSSTDPRVDSGKWPKYTVFKIGSLFVSGREKPVYLYCRVNGTNKIQMKWGMEARRCLLQSMQQMEAIVDQESSIQGYDMTKACFKGDRVNNPKTFSIGTQEGKLVKGSFGKALRVIFTKCLMHYVFGNAQLEGFSAESRRLLLLIQALKDRKGPWVFDLEGMYFGVEECISNNPWVIQSAYWFNEWLGIEKEGSKVLESIDEIMDE.

Mn(2+)-binding residues include His41, Glu81, Asp109, Glu120, and Val121. A Nuclear localization signal 1 (NLS1) motif is present at residues 125-140 (KGLADDYFWKKKEKLG). Positions 183-244 (LKNLWQVLIG…PKGAIERNLA (62 aa)) match the Nuclear localization signal 2 (NLS2) motif.

Belongs to the influenza viruses PA family. In terms of assembly, influenza RNA polymerase is composed of three subunits: PB1, PB2 and PA. Interacts (via C-terminus) with PB1 (via N-terminus). Mn(2+) is required as a cofactor. Phosphorylated on serines and threonines by host kinases, including human casein kinase II.

Its subcellular location is the host cytoplasm. It is found in the host nucleus. Its function is as follows. Plays an essential role in viral RNA transcription and replication by forming the heterotrimeric polymerase complex together with PB1 and PB2 subunits. The complex transcribes viral mRNAs by using a unique mechanism called cap-snatching. It consists in the hijacking and cleavage of host capped pre-mRNAs. These short capped RNAs are then used as primers for viral mRNAs. The PB2 subunit is responsible for the binding of the 5' cap of cellular pre-mRNAs which are subsequently cleaved after 10-13 nucleotides by the PA subunit that carries the endonuclease activity. The protein is Polymerase acidic protein of Influenza B virus (strain B/Lee/1940).